The chain runs to 222 residues: Charged multivesicular body protein 2a (222 aa).

N-acetylmethionine is present on M1. A coiled-coil region spans residues 12–53 (EELLRQNQRALNRAMRELDRERQKLETQEKKIIADIKKMAKQ). An interaction with VPS4B region spans residues 56-222 (MDAVRIMAKD…EERLKNLRRD (167 aa)). S184 carries the post-translational modification Phosphoserine. T185 bears the Phosphothreonine mark. A phosphoserine mark is found at S188, S190, and S203. Residues 195 to 222 (GKKAEAAASALADADADLEERLKNLRRD) adopt a coiled-coil conformation. The short motif at 210–220 (ADLEERLKNLR) is the MIT-interacting motif element. Residues 217–222 (KNLRRD) form an interaction with VTA1 region.

Belongs to the SNF7 family. As to quaternary structure, probable core component of the endosomal sorting required for transport complex III (ESCRT-III). ESCRT-III components are thought to multimerize to form a flat lattice on the perimeter membrane of the endosome. Several assembly forms of ESCRT-III may exist that interact and act sequentially. In vitro, heteromerizes with CHMP3 (but not CHMP4) to form helical tubular structures that expose membrane-interacting sites on the outside whereas VPS4B can associate on the inside of the tubule. Interacts with CHMP1B, CHMP2B, CHMP3, CHMP4A, CHMP4B, CHMP4C and CHMP5. Interacts with VPS4A; the interaction is direct. Interacts with VPS4B; the interaction is direct. Interacts with MITD1. Interacts with VTA1; the interaction probably involves the open conformation of CHMP2A. ISGylated in a CHMP5-dependent manner. Isgylation weakens and inhibits its interactions with VPS4A and VTA1 respectively.

It localises to the late endosome membrane. The protein localises to the nucleus envelope. Its function is as follows. Probable core component of the endosomal sorting required for transport complex III (ESCRT-III) which is involved in multivesicular bodies (MVBs) formation and sorting of endosomal cargo proteins into MVBs. MVBs contain intraluminal vesicles (ILVs) that are generated by invagination and scission from the limiting membrane of the endosome and mostly are delivered to lysosomes enabling degradation of membrane proteins, such as stimulated growth factor receptors, lysosomal enzymes and lipids. The MVB pathway appears to require the sequential function of ESCRT-O, -I,-II and -III complexes. ESCRT-III proteins mostly dissociate from the invaginating membrane before the ILV is released. The ESCRT machinery also functions in topologically equivalent membrane fission events, such as the terminal stages of cytokinesis. Together with SPAST, the ESCRT-III complex promotes nuclear envelope sealing and mitotic spindle disassembly during late anaphase. Recruited to the reforming nuclear envelope (NE) during anaphase by LEMD2. ESCRT-III proteins are believed to mediate the necessary vesicle extrusion and/or membrane fission activities, possibly in conjunction with the AAA ATPase VPS4. (Microbial infection) The ESCRT machinery functions in topologically equivalent membrane fission events, such as the budding of enveloped viruses (HIV-1 and other lentiviruses). Involved in HIV-1 p6- and p9-dependent virus release. This chain is Charged multivesicular body protein 2a (CHMP2A), found in Homo sapiens (Human).